A 267-amino-acid chain; its full sequence is MERDFLGLSDKQYLSNNVKHEVNDDAVEERGLSTKAAREWGKSKVFATSSFMPSSDFQEAKAFPGAYQWGSVSAANVFRRCQFGGAFQNATPLLLGGSVPLPTHPSLVPRVASSGSSPQLTIFYGGTISVFNDISPDKAQAIMLCAGNGLKGETGDSKPVREAERMYGKQIHNTAATSSSSATHTDNFSRCRDTPVAATNAMSMIESFNAAPRNMIPSVPQARKASLARFLEKRKERLMSAMPYKKMLLDLSTGESSGMNYSSTSPT.

Positions 113–148 constitute a Tify domain; it reads SSGSSPQLTIFYGGTISVFNDISPDKAQAIMLCAGN. A Jas motif is present at residues 220-244; it reads PQARKASLARFLEKRKERLMSAMPY. Positions 222–229 match the Nuclear localization signal motif; sequence ARKASLAR.

The protein belongs to the TIFY/JAZ family. As to quaternary structure, homo- and heterodimer. Interacts with MYC2, MYC3, MYC4, COI1, AFPH2/NINJA, TIFY10A/JAZ1, TIFY10B/JAZ2, TIFY6B/JAZ3, TIFY5A/JAZ8, TIFY9/JAZ10 and TIFY3A/JAZ11. Interacts with RHD6 and RSL1. Post-translationally, ubiquitinated. Targeted for degradation by the SCF(COI1) E3 ubiquitin ligase-proteasome pathway during jasmonate signaling.

The protein resides in the nucleus. Functionally, repressor of jasmonate responses. Jasmonoyl-isoleucine (JA-Ile) specifically promotes COI1-TIFY7/JAZ9 interaction. Interacts with and suppresses RHD6 and RSL1 transcription factor activities to negatively regulate jasmonate-stimulated root hair development. This is Protein TIFY 7 (TIFY7) from Arabidopsis thaliana (Mouse-ear cress).